The following is a 279-amino-acid chain: Calcium-binding protein 4 (279 aa).

Over residues 1 to 12 the composition is skewed to basic and acidic residues; sequence MAEEQGRGRHGP. The tract at residues 1 to 114 is disordered; it reads MAEEQGRGRH…PGPQHDAAQR (114 aa). Serine 42 bears the Phosphoserine mark. Residues 55–65 are compositionally biased toward polar residues; sequence GPSSSGEQTPM. EF-hand domains follow at residues 133 to 168, 187 to 204, 210 to 245, and 247 to 279; these read EELD…LGYM, GRVD…KLRE, LGLR…LLGE, and LVGP…LSRH. Residues aspartate 146, aspartate 148, aspartate 150, tyrosine 152, and aspartate 157 each contribute to the Ca(2+) site. Ca(2+) is bound by residues aspartate 223, aspartate 225, aspartate 227, arginine 229, glutamate 234, aspartate 260, asparagine 262, aspartate 264, threonine 266, and glutamate 271.

As to quaternary structure, interacts with CACNA1F and CACNA1D (via IQ domain) in a calcium independent manner. Interacts (via N-terminus) with UNC119. Post-translationally, phosphorylated. Phosphorylation levels change with the light conditions and regulate the activity. As to expression, expressed in the retina.

Its subcellular location is the cytoplasm. It is found in the presynapse. In terms of biological role, may play a role in normal synaptic function, probably through regulation of Ca(2+) influx and neurotransmitter release in photoreceptor synaptic terminals and in auditory transmission. Modulator of CACNA1F, shifting the activation range to more hyperpolarized voltages. In Bos taurus (Bovine), this protein is Calcium-binding protein 4 (CABP4).